A 420-amino-acid chain; its full sequence is Histidine--tRNA ligase (420 aa).

The protein belongs to the class-II aminoacyl-tRNA synthetase family. As to quaternary structure, homodimer.

The protein resides in the cytoplasm. The catalysed reaction is tRNA(His) + L-histidine + ATP = L-histidyl-tRNA(His) + AMP + diphosphate + H(+). The sequence is that of Histidine--tRNA ligase from Staphylococcus saprophyticus subsp. saprophyticus (strain ATCC 15305 / DSM 20229 / NCIMB 8711 / NCTC 7292 / S-41).